The chain runs to 296 residues: MASFPCPIEETLLPVPCKVNLRLAVGARRPNGYHDIDTFFLPLPEPADVLRLRRFDGPGDIDLQCSDPELETDDNLVVRAYRAYAAATGYAPRLEVHLAKHIPHGAGLGGGSSDAAVMLRYLNDRADEAALSPVDLAALALTLGADIPFFLLGVPAVATGVGETLIPADPGLAGWCAVVVCPEARVKTAWAYAALDASRALPQKPGANLLTTAFDANKRAFCVTGAPMRNDFESVVFAAHPELGRVKERLLALGAAGALLSGTGSAVFGLFRKRQTATLALAMLTGSGPRAYLAPL.

Lys-18 is an active-site residue. 103-113 (PHGAGLGGGSS) provides a ligand contact to ATP. Asp-146 is a catalytic residue.

It belongs to the GHMP kinase family. IspE subfamily.

It carries out the reaction 4-CDP-2-C-methyl-D-erythritol + ATP = 4-CDP-2-C-methyl-D-erythritol 2-phosphate + ADP + H(+). The protein operates within isoprenoid biosynthesis; isopentenyl diphosphate biosynthesis via DXP pathway; isopentenyl diphosphate from 1-deoxy-D-xylulose 5-phosphate: step 3/6. Functionally, catalyzes the phosphorylation of the position 2 hydroxy group of 4-diphosphocytidyl-2C-methyl-D-erythritol. In Solidesulfovibrio magneticus (strain ATCC 700980 / DSM 13731 / RS-1) (Desulfovibrio magneticus), this protein is 4-diphosphocytidyl-2-C-methyl-D-erythritol kinase.